Reading from the N-terminus, the 263-residue chain is Trans-aconitate 2-methyltransferase (263 aa).

It belongs to the methyltransferase superfamily. Tam family.

It localises to the cytoplasm. It carries out the reaction trans-aconitate + S-adenosyl-L-methionine = (E)-3-(methoxycarbonyl)pent-2-enedioate + S-adenosyl-L-homocysteine. Catalyzes the S-adenosylmethionine monomethyl esterification of trans-aconitate. The chain is Trans-aconitate 2-methyltransferase from Mycobacterium ulcerans (strain Agy99).